The following is a 585-amino-acid chain: 3-hydroxy-3-methylglutaryl-coenzyme A reductase 1 (585 aa).

2 helical membrane-spanning segments follow: residues 38–58 (LYLTNAVFFTLFFSAVYFLLC) and 77–97 (EIVAILASVASFIYLLGFFGI). Residues 98 to 169 (DFVQSLVLRP…DEMPVTVMTE (72 aa)) are linker. Residues 170-585 (EDEEIIRSVV…SSKDVSKVSS (416 aa)) are catalytic. The Charge relay system role is filled by Glu264. N-linked (GlcNAc...) asparagine glycosylation is present at Asn328. The active-site Charge relay system is Lys396. N-linked (GlcNAc...) asparagine glycosylation is present at Asn441. Residue Asp472 is the Charge relay system of the active site. Residue His570 is the Proton donor of the active site. N-linked (GlcNAc...) asparagine glycosylation is present at Asn574.

The protein belongs to the HMG-CoA reductase family.

The protein resides in the endoplasmic reticulum membrane. The protein localises to the mitochondrion membrane. Its subcellular location is the plastid membrane. The enzyme catalyses (R)-mevalonate + 2 NADP(+) + CoA = (3S)-3-hydroxy-3-methylglutaryl-CoA + 2 NADPH + 2 H(+). It participates in metabolic intermediate biosynthesis; (R)-mevalonate biosynthesis; (R)-mevalonate from acetyl-CoA: step 3/3. In terms of biological role, catalyzes the synthesis of mevalonate. The specific precursor of all isoprenoid compounds present in plants. The chain is 3-hydroxy-3-methylglutaryl-coenzyme A reductase 1 (HMG1) from Gossypium hirsutum (Upland cotton).